A 451-amino-acid chain; its full sequence is UPF0210 protein NMB1652 (451 aa).

The protein belongs to the UPF0210 family. As to quaternary structure, homodimer.

The chain is UPF0210 protein NMB1652 from Neisseria meningitidis serogroup B (strain ATCC BAA-335 / MC58).